We begin with the raw amino-acid sequence, 577 residues long: Insulin-like growth factor 2 mRNA-binding protein 1 (577 aa).

RRM domains are found at residues 2–75 (NKLY…HSVP) and 81–156 (RKIQ…YIPD). Residues serine 12 and serine 73 each carry the phosphoserine modification. The segment at 156–190 (DEQITQGPENGRRGGFGSRGQPRQGSPVAAGAPAK) is disordered. Serine 181 bears the Phosphoserine; by MTOR mark. KH domains follow at residues 195–260 (DIPL…CKMI), 276–343 (EVPL…EQEI), 405–470 (QEMV…QGRI), and 487–553 (KLET…QRKI). The sufficient for nuclear export stretch occupies residues 312 to 323 (ISSLQDLTLYNP). Residues 485 to 495 (EVKLETHIRVP) form a sufficient for nuclear export region. Threonine 528 is modified (phosphothreonine).

It belongs to the RRM IMP/VICKZ family. Can form homodimers and heterodimers with IGF2BP1 and IGF2BP3. Component of the coding region determinant (CRD)-mediated complex, composed of DHX9, HNRNPU, IGF2BP1, SYNCRIP and YBX1. Identified in a mRNP complex, at least composed of DHX9, DDX3X, ELAVL1, HNRNPU, IGF2BP1, ILF3, PABPC1, PCBP2, PTBP2, STAU1, STAU2, SYNCRIP and YBX1. Associates with mRNP complex. Interacts with FMR1. Component of a multisubunit autoregulatory RNP complex (ARC), at least composed of IGF2BP1, PABPC1 and CSDE1. Interacts with AGO1 and AGO2. Interacts, through domains KH3 and KH4, with PABPC1 in an RNA-independent manner. Component of a TAU mRNP complex, at least composed of IGF2BP1, ELAVL4 and G3BP. Interacts with ELAVL4 in an RNA-dependent manner. Associates with microtubules and polysomes. Interacts with ELAVL1 and MATR3. In terms of processing, phosphorylated at Ser-181 by mTORC2 cotranslationally, promoting binding to the 3'-UTR of IGF2 mRNA. Expressed in zygotes and blastocysts (at protein level). Expressed in brain, skeletal muscle, trophoblasts of placenta, oocytes and spermatogonia (at protein level). Expressed in testis and ovary. Following colon injury, expressed in the wound bed mesenchyme during the first phase of repair, probably by colonic mesenchymal stem cells (at protein level).

The protein resides in the nucleus. It is found in the cytoplasm. The protein localises to the perinuclear region. Its subcellular location is the P-body. It localises to the stress granule. The protein resides in the cell projection. It is found in the lamellipodium. The protein localises to the dendrite. Its subcellular location is the dendritic spine. It localises to the growth cone. The protein resides in the filopodium. It is found in the axon. Its function is as follows. RNA-binding factor that recruits target transcripts to cytoplasmic protein-RNA complexes (mRNPs). This transcript 'caging' into mRNPs allows mRNA transport and transient storage. It also modulates the rate and location at which target transcripts encounter the translational apparatus and shields them from endonuclease attacks or microRNA-mediated degradation. Preferentially binds to N6-methyladenosine (m6A)-containing mRNAs and increases their stability. Regulates localized beta-actin/ACTB mRNA translation, a crucial process for cell polarity, cell migration and neurite outgrowth. Co-transcriptionally associates with the ACTB mRNA in the nucleus. This binding involves a conserved 54-nucleotide element in the ACTB mRNA 3'-UTR, known as the 'zipcode'. The RNP thus formed is exported to the cytoplasm, binds to a motor protein and is transported along the cytoskeleton to the cell periphery. During transport, prevents ACTB mRNA from being translated into protein. When the RNP complex reaches its destination near the plasma membrane, IGF2BP1 is phosphorylated. This releases the mRNA, allowing ribosomal 40S and 60S subunits to assemble and initiate ACTB protein synthesis. Monomeric ACTB then assembles into the subcortical actin cytoskeleton. During neuronal development, key regulator of neurite outgrowth, growth cone guidance and neuronal cell migration, presumably through the spatiotemporal fine tuning of protein synthesis, such as that of ACTB. May regulate mRNA transport to activated synapses. Binds to the 3'-UTR of CD44 mRNA and stabilizes it, hence promotes cell adhesion and invadopodia formation in cancer cells. Binds to the oncofetal H19 transcript and regulates its localization. Binds to and stabilizes BTRC/FBW1A mRNA. Binds to the adenine-rich autoregulatory sequence (ARS) located in PABPC1 mRNA and represses its translation. PABPC1 mRNA-binding is stimulated by PABPC1 protein. Prevents BTRC/FBW1A mRNA degradation by disrupting microRNA-dependent interaction with AGO2. During cellular stress, such as oxidative stress or heat shock, stabilizes target mRNAs that are recruited to stress granules, including CD44, IGF2, MAPK4, MYC, PTEN, RAPGEF2 and RPS6KA5 transcripts. Interacts with GAP43 transcript and transports it to axons. Binds to the 3'-UTR of IGF2 mRNA by a mechanism of cooperative and sequential dimerization and regulates IGF2 mRNA subcellular localization and translation. Binds to MYC mRNA, in the coding region instability determinant (CRD) of the open reading frame (ORF), hence prevents MYC cleavage by endonucleases and possibly microRNA targeting to MYC-CRD. Binding to MYC mRNA is enhanced by m6A-modification of the CRD. Binds to and stabilizes ABCB1/MDR-1 mRNA. Binds to the neuron-specific TAU mRNA and regulates its localization. Plays a direct role in the transport and translation of transcripts required for axonal regeneration in adult sensory neurons. During interstinal wound repair, interacts with and stabilizes PTGS2 transcript. PTGS2 mRNA stabilization may be crucial for colonic mucosal wound healing. The polypeptide is Insulin-like growth factor 2 mRNA-binding protein 1 (Igf2bp1) (Mus musculus (Mouse)).